We begin with the raw amino-acid sequence, 389 residues long: MKSAALLLPLYAAAFAAAAFHHEHAQAVIQEQQLTIVEPDEYLIELSPGETRWVTENEKWELRKKNINFFDITHNAELGTLKRRINAASVEYPSKPVFNETLAPLLKELDKNNMRAHLETFTSFHTRYYKSQYGVQSSAWLLDQVKKTLADAGASKASVKAFPHPWGQSSIIATIPGKSDKTIVIGAHQDSINLFFPAFLAAPGADDDGSGTVTILEALRVLLKSDEILKGEADNTIEFHWYSAEEGGLLGSQAIFQSYEKEARDVKAMLQQDMTGYVQKTLDAGEPESVGVITDFVDPGLTEFIKKIITVYCDIPYVLTKCGYACSDHASASKAGYPSAFVIESDFKYSDNKIHTTEDKIEYLSFDHMLQHARMTLALAYELAFAEFK.

Positions 1-18 (MKSAALLLPLYAAAFAAA) are cleaved as a signal peptide. Positions 19–89 (AFHHEHAQAV…TLKRRINAAS (71 aa)) are excised as a propeptide. Asn99 carries N-linked (GlcNAc...) asparagine glycosylation. His188, Asp207, Glu246, and Asp273 together coordinate Zn(2+). A disulfide bridge links Cys322 with Cys326. His355 contributes to the Zn(2+) binding site.

It belongs to the peptidase M28 family. M28E subfamily. As to quaternary structure, monomer. Zn(2+) is required as a cofactor.

The protein localises to the secreted. Extracellular aminopeptidase that allows assimilation of proteinaceous substrates. This Pyrenophora teres f. teres (strain 0-1) (Barley net blotch fungus) protein is Leucine aminopeptidase 1 (lap1).